We begin with the raw amino-acid sequence, 402 residues long: Aminotransferase-like protein FGM3 (402 aa).

Pyridoxal 5'-phosphate contacts are provided by residues 137 to 138 (TI), aspartate 218, and 282 to 283 (FG).

The protein belongs to the class-V pyridoxal-phosphate-dependent aminotransferase family. Csd subfamily.

Functionally, aminotransferase-like protein; part of the Fg3_54/C64 gene cluster that mediates the biosynthesis of the octapeptide fusaoctaxin A, a virulence factor that is required for cell-to-cell invasiveness of plant host. The 2 nonribosomal peptide synthetases NRPS9 and NRPS5 form an assembly line which likely utilizes GABA as a starter unit (loaded on the unique module M1 of NRPS9) and sequentially incorporates seven extender units composed of the residues L-Ala, L-allo-Ile, L-Ser, L-Val, L-Ser, L-Leu and L-Leu, respectively. During the process, each of the residues that are tethered on modules M3-M7 of NRPS5 containing an E domain can undergo an epimerization reaction to produce a D-configuration before the transpeptidation reaction occurs. The elongation of the peptidyl chain might be terminated by module M8-mediated L-Leu incorporation, followed by R domain-catalyzed 4 electron reduction to release the resulting octapeptide from the assembly line as an alcohol. Fusaoctaxin A is cleaved by the cluster specific ABC transporter FGM5 to the pentapeptide fusapentaxin A and the tripeptide fusatrixin A. The other enzymes from the cluster, FGM1, FGM2, FGM3 and FGM9 seem not to be involved in the biosynthesis of fusaoctaxin A and their functions have still to be determined. The polypeptide is Aminotransferase-like protein FGM3 (Gibberella zeae (strain ATCC MYA-4620 / CBS 123657 / FGSC 9075 / NRRL 31084 / PH-1) (Wheat head blight fungus)).